A 212-amino-acid chain; its full sequence is N-(5'-phosphoribosyl)anthranilate isomerase (212 aa).

It belongs to the TrpF family.

It carries out the reaction N-(5-phospho-beta-D-ribosyl)anthranilate = 1-(2-carboxyphenylamino)-1-deoxy-D-ribulose 5-phosphate. It functions in the pathway amino-acid biosynthesis; L-tryptophan biosynthesis; L-tryptophan from chorismate: step 3/5. The chain is N-(5'-phosphoribosyl)anthranilate isomerase from Myxococcus xanthus (strain DK1622).